The primary structure comprises 144 residues: HTH-type transcriptional regulator MntR (144 aa).

In terms of domain architecture, HTH dtxR-type spans 1-63 (MTTPSMEDYI…YEKYRGLILT (63 aa)). Aspartate 8, glutamate 11, histidine 77, glutamate 99, glutamate 102, and histidine 103 together coordinate Mn(2+).

It belongs to the DtxR/MntR family. Homodimer.

Its subcellular location is the cytoplasm. With respect to regulation, DNA binding is strongly activated by Mn(2+). Functionally, central regulator of manganese homeostasis. This is HTH-type transcriptional regulator MntR from Bacillus pumilus (strain SAFR-032).